The chain runs to 146 residues: Hemoglobin subunit beta (146 aa).

Position 1 is an N-acetylvaline (valine 1). The 145-residue stretch at 2–146 (HLTDAEKALV…VATALAHKYH (145 aa)) folds into the Globin domain. Threonine 12 carries the post-translational modification Phosphothreonine. Serine 44 carries the post-translational modification Phosphoserine. N6-acetyllysine is present on lysine 59. Heme b is bound at residue histidine 63. Lysine 82 bears the N6-acetyllysine mark. A heme b-binding site is contributed by histidine 92. Residue cysteine 93 is modified to S-nitrosocysteine. Lysine 144 is modified (N6-acetyllysine).

Belongs to the globin family. Heterotetramer of two alpha chains and two beta chains. As to expression, red blood cells.

Its function is as follows. Involved in oxygen transport from the lung to the various peripheral tissues. This chain is Hemoglobin subunit beta, found in Peromyscus crinitus (Canyon mouse).